Reading from the N-terminus, the 309-residue chain is tRNA pseudouridine synthase B (309 aa).

Asp-39 acts as the Nucleophile in catalysis.

The protein belongs to the pseudouridine synthase TruB family. Type 1 subfamily.

It carries out the reaction uridine(55) in tRNA = pseudouridine(55) in tRNA. In terms of biological role, responsible for synthesis of pseudouridine from uracil-55 in the psi GC loop of transfer RNAs. This Bacillus pumilus (strain SAFR-032) protein is tRNA pseudouridine synthase B.